The primary structure comprises 513 residues: MEEYEAQLLVVEQALENAADEAQRQDLLALKNNLQELLALTRDTGDEAHTDELPQQGDDLDDELQRLKSELSDLEAVGSSQTALDEERQLADLRTKYTAMVGEKCSAPHEHSWGTCYHNALICGVDDEVVMNSEGVLDARLRVLFTNPTHREMLPCSYYLEGECRFDETKCRFSHGALVPGSSIRKYNPPDFHKLSRSRPVFALLPDRLWHRGRVLCVNFVEQVCRVRLDGQDHKERERDFKFEELFPLTTDQDEDDELSSEESNSSMNDDSSDEAESDMDDLEEARRARMVELSLFTFKPTERLGAWEEFTRGIGSKLMEKMGYIHGTGLGSDGRGIVTPVSAQILPQGRSLDACMELREAANGDKDYFSVERKLKRAQRRQRKADEKAYVRESQRVDVFTFLNDSVLGPGESSQQGEQVAKKIKTNELQQHSTKTLNVETVRIADEIRRKQRDMAKVKQSLDRNSGDAQLQKRLQVQMESHKQELATLQAQERSLSKEQQTRKSKNKMFEF.

A C3H1-type zinc finger spans residues 155–178 (PCSYYLEGECRFDETKCRFSHGAL). 2 stretches are compositionally biased toward acidic residues: residues 252–261 (DQDEDDELSS) and 271–283 (DSSDEAESDMDDL). The segment at 252–283 (DQDEDDELSSEESNSSMNDDSSDEAESDMDDL) is disordered. A G-patch domain is found at 312–358 (TRGIGSKLMEKMGYIHGTGLGSDGRGIVTPVSAQILPQGRSLDACME). The segment covering 455-467 (DMAKVKQSLDRNS) has biased composition (basic and acidic residues). Residues 455-513 (DMAKVKQSLDRNSGDAQLQKRLQVQMESHKQELATLQAQERSLSKEQQTRKSKNKMFEF) are disordered. Over residues 468–480 (GDAQLQKRLQVQM) the composition is skewed to polar residues. Residues 496 to 513 (SLSKEQQTRKSKNKMFEF) show a composition bias toward basic and acidic residues.

The protein localises to the nucleus. Its function is as follows. Transcription repressor. The sequence is that of Zinc finger CCCH-type with G patch domain-containing protein from Drosophila yakuba (Fruit fly).